The primary structure comprises 95 residues: Protein RnfH (95 aa).

This sequence belongs to the UPF0125 (RnfH) family.

The polypeptide is Protein RnfH (Methylococcus capsulatus (strain ATCC 33009 / NCIMB 11132 / Bath)).